The chain runs to 117 residues: Ubiquitin-like protein pmt3/smt3 (117 aa).

Residues 1–37 form a disordered region; it reads MSESPSANISDADKSAITPTTGDTSQQDVKPSTEHIN. Positions 17 to 30 are enriched in polar residues; sequence ITPTTGDTSQQDVK. A Ubiquitin-like domain is found at 35–115; sequence HINLKVVGQD…LEQLGGCTHL (81 aa). Gly-111 participates in a covalent cross-link: Glycyl lysine isopeptide (Gly-Lys) (interchain with K-? in acceptor proteins). The propeptide occupies 112-117; that stretch reads CTHLCL.

It belongs to the ubiquitin family. SUMO subfamily. As to quaternary structure, interacts with rfp1.

The protein localises to the nucleus. In terms of biological role, required for chromosome segregation where it may be involved in microtubule assembly. Loss of smt3 leads to an increase in telomere length. This is Ubiquitin-like protein pmt3/smt3 (pmt3) from Schizosaccharomyces pombe (strain 972 / ATCC 24843) (Fission yeast).